The chain runs to 800 residues: Protein gfi-3 (800 aa).

Residues 346 to 366 (ESLQQAQLRNDEICHQMANIE) adopt a coiled-coil conformation. TPR repeat units lie at residues 526-559 (AIGA…YPEE) and 637-670 (IRIH…AENT).

As to quaternary structure, the APC/C complex is probably composed of at least 12 subunits: apc-2, apc-10, apc-11, cdc-26, emb-1, emb-27, emb-30, mat-1, mat-2, mat-3, such-1 and gfi-3. Expressed in gut cells and mature sperm stored in the spermatheca.

The protein operates within protein modification; protein ubiquitination. Its function is as follows. Probable component of the anaphase promoting complex/cyclosome (APC/C), a cell cycle-regulated E3 ubiquitin ligase that controls progression through mitosis and the G1 phase of the cell cycle. The APC/C complex acts by mediating ubiquitination and subsequent degradation of target proteins. Required for the metaphase to anaphase transition in meiosis. The protein is Protein gfi-3 of Caenorhabditis elegans.